Consider the following 214-residue polypeptide: Leucyl/phenylalanyl-tRNA--protein transferase (214 aa).

The disordered stretch occupies residues Phe194–Ser214.

The protein belongs to the L/F-transferase family.

It localises to the cytoplasm. It carries out the reaction N-terminal L-lysyl-[protein] + L-leucyl-tRNA(Leu) = N-terminal L-leucyl-L-lysyl-[protein] + tRNA(Leu) + H(+). The enzyme catalyses N-terminal L-arginyl-[protein] + L-leucyl-tRNA(Leu) = N-terminal L-leucyl-L-arginyl-[protein] + tRNA(Leu) + H(+). It catalyses the reaction L-phenylalanyl-tRNA(Phe) + an N-terminal L-alpha-aminoacyl-[protein] = an N-terminal L-phenylalanyl-L-alpha-aminoacyl-[protein] + tRNA(Phe). Its function is as follows. Functions in the N-end rule pathway of protein degradation where it conjugates Leu, Phe and, less efficiently, Met from aminoacyl-tRNAs to the N-termini of proteins containing an N-terminal arginine or lysine. This Cereibacter sphaeroides (strain ATCC 17025 / ATH 2.4.3) (Rhodobacter sphaeroides) protein is Leucyl/phenylalanyl-tRNA--protein transferase.